A 166-amino-acid chain; its full sequence is Photosystem I assembly protein Ycf3 (166 aa).

3 TPR repeats span residues 35-68 (AFVY…EVDP), 72-105 (SFIF…NPSL), and 120-153 (GEQA…APLN).

The protein belongs to the Ycf3 family.

It is found in the plastid. The protein resides in the chloroplast thylakoid membrane. Functionally, essential for the assembly of the photosystem I (PSI) complex. May act as a chaperone-like factor to guide the assembly of the PSI subunits. The polypeptide is Photosystem I assembly protein Ycf3 (Ostreococcus tauri).